The following is a 154-amino-acid chain: Cindoxin (154 aa).

The Flavodoxin-like domain occupies 3 to 145; sequence ALILYGTETG…TAEEWAREIL (143 aa). Residues 9-13 and 89-120 contribute to the FMN site; these read TETGN and VFGLGDSYYTTFNQAGATAATILASLGGTQVG.

FMN is required as a cofactor.

Its function is as follows. Involved in the degradation of cineol (eucalyptol). The FMN protein, cindoxin, shuttles electrons between the FAD-containing cindoxin reductase (CinB) and 1,8-cineole 2-endo-monooxygenase (CinA). This Citrobacter braakii protein is Cindoxin (cinC).